A 352-amino-acid polypeptide reads, in one-letter code: Popeye domain-containing protein 1 (352 aa).

The Extracellular segment spans residues 1 to 38; it reads MSNTTSALPSSVPAVSLDPNATLCQDWEQSHHLLFHLA. 2 N-linked (GlcNAc...) asparagine glycosylation sites follow: asparagine 3 and asparagine 20. The chain crosses the membrane as a helical span at residues 39 to 59; it reads NLSLGLGFLIPTTLALHMIFL. A topological domain (cytoplasmic) is located at residue arginine 60. A helical transmembrane segment spans residues 61-81; sequence LLLMTGCSLFIAWATLYRCTL. Aspartate 82 is a topological domain (extracellular). A helical membrane pass occupies residues 83 to 103; sequence VMVWNVVFLLVNFMHFFFLLY. Residues 104–352 lie on the Cytoplasmic side of the membrane; the sequence is KRRPIKIDRE…NVSKTTKKDI (249 aa). The segment at 299–352 is disordered; that stretch reads ILRGGSTGSSLQKNPLTKTSTTMKPIEEGLEDDVFESESPTTSQNVSKTTKKDI. Polar residues-rich tracts occupy residues 306–321 and 336–346; these read GSSLQKNPLTKTSTTM and ESPTTSQNVSK.

The protein belongs to the popeye family. Expressed in skeletal muscle (at protein level).

The protein localises to the lateral cell membrane. Its subcellular location is the cell junction. The protein resides in the tight junction. It is found in the membrane. It localises to the cell membrane. The protein localises to the sarcolemma. Its subcellular location is the caveola. Cell adhesion molecule involved in the establishment and/or maintenance of cell integrity. Involved in skeletal muscle and heart development as well as in the maintenance of heart function. May play a role in vamp3-mediated vesicular transport and recycling of receptor molecules. Involved in the formation and regulation of the tight junction (TJ) paracellular permeability barrier in epithelial cells. May induce primordial adhesive contact and aggregation of epithelial cells in a Ca(2+)-independent manner. May be involved in epithelial movement during corneal sheet formation and regeneration. May play a role in the regulation of cell shape and movement by modulating the Rho-GTPase activity. May also be involved in striated muscle regeneration and in the regulation of cell spreading. The sequence is that of Popeye domain-containing protein 1 (popdc1) from Danio rerio (Zebrafish).